The following is a 665-amino-acid chain: RNA polymerase II-associated protein 3 (665 aa).

An N-acetylthreonine modification is found at T2. The stretch at 8–41 is one TPR 1 repeat; sequence IELQLQVKQNAEELQDFMRDLENWEKDIKQKDME. The segment at 37–82 is disordered; it reads QKDMELRRQNGVPEENLPPIRNGNFRKKKKGKAKESSKKTREENTK. Over residues 69–82 the composition is skewed to basic and acidic residues; that stretch reads AKESSKKTREENTK. Residues S87, S116, S119, and S121 each carry the phosphoserine modification. A disordered region spans residues 109 to 129; the sequence is DSTHESLSQESESEEDGIHVD. TPR repeat units lie at residues 133–166, 168–200, 201–234, 282–315, 317–349, and 350–383; these read ALVLKEKGNKYFKQGKYDEAIDCYTKGMDADPYN, VLPTNRASAYFRLKKFAVAESDCNLAVALNRSY, TKAYSRRGAARFALQKLEEAKKDYERVLELEPNN, AISEKDRGNGFFKEGKYERAIECYTRGIAADGAN, LLPANRAMAYLKIQKYEEAEKDCTQAILLDGSY, and SKAFARRGTARTFLGKLNEAKQDFETVLLLEPGN. S481 carries the post-translational modification Phosphoserine. K498 participates in a covalent cross-link: Glycyl lysine isopeptide (Lys-Gly) (interchain with G-Cter in SUMO2).

It belongs to the RPAP3 family. Tightly associated with the RNA polymerase II complex. Component of the R2TP complex composed at least of RUVBL1, RUVBL2, RPAP3 and PIHD1. Component of the PAQosome complex which is responsible for the biogenesis of several protein complexes and which consists of R2TP complex members RUVBL1, RUVBL2, RPAP3 and PIH1D1, URI complex members PFDN2, PFDN6, PDRG1, UXT and URI1 as well as ASDURF, POLR2E and DNAAF10/WDR92. Interacts with PIH1D1. Interacts with TSC1 and TSC2. Interacts with PRPF8 and EFTUD2 in a ZNHIT2-dependent manner.

Forms an interface between the RNA polymerase II enzyme and chaperone/scaffolding protein, suggesting that it is required to connect RNA polymerase II to regulators of protein complex formation. The chain is RNA polymerase II-associated protein 3 (RPAP3) from Homo sapiens (Human).